A 199-amino-acid polypeptide reads, in one-letter code: NAD(P)H dehydrogenase (quinone) (199 aa).

The Flavodoxin-like domain maps to 4 to 190 (VLVLYYSSYG…AMARFQGGHV (187 aa)). Residues 10–15 (SSYGHI) and 78–80 (TRF) each bind FMN. Tyrosine 12 provides a ligand contact to NAD(+). Tryptophan 98 serves as a coordination point for substrate. Residues 113–119 (STATQHG) and histidine 134 each bind FMN.

Belongs to the WrbA family. FMN is required as a cofactor.

It carries out the reaction a quinone + NADH + H(+) = a quinol + NAD(+). The enzyme catalyses a quinone + NADPH + H(+) = a quinol + NADP(+). The polypeptide is NAD(P)H dehydrogenase (quinone) (Azoarcus sp. (strain BH72)).